An 83-amino-acid polypeptide reads, in one-letter code: MKKVLALVVAAAMGLSSAAFAAETATPAKTATPAKTTQNTQHHKKQHKKTVEQKAQAAKKHQKKDGKKAPAKSTSKTTSQPAA.

Positions 1 to 21 (MKKVLALVVAAAMGLSSAAFA) are cleaved as a signal peptide. The span at 22-40 (AETATPAKTATPAKTTQNT) shows a compositional bias: low complexity. The propeptide occupies 22-56 (AETATPAKTATPAKTTQNTQHHKKQHKKTVEQKAQ). Residues 22 to 83 (AETATPAKTA…TSKTTSQPAA (62 aa)) form a disordered region. Over residues 57-70 (AAKKHQKKDGKKAP) the composition is skewed to basic residues. Over residues 71-83 (AKSTSKTTSQPAA) the composition is skewed to low complexity.

It belongs to the Asr family. Proteolytic processing gives rise to the active protein.

The protein localises to the periplasm. Required for growth and/or survival at acidic conditions. This Salmonella heidelberg (strain SL476) protein is Acid shock protein.